Here is a 1186-residue protein sequence, read N- to C-terminus: ATP-dependent helicase/nuclease subunit A (1186 aa).

The UvrD-like helicase ATP-binding domain occupies 2 to 460 (NFSKNQRAVI…IELSENYRSQ (459 aa)). Position 23-30 (23-30 (ASAGSGKT)) interacts with ATP. Residues 487 to 771 (DVELKAANRD…SVMTIHAAKG (285 aa)) enclose the UvrD-like helicase C-terminal domain.

The protein belongs to the helicase family. AddA subfamily. As to quaternary structure, heterodimer of AddA and AddB/RexB. Mg(2+) serves as cofactor.

The catalysed reaction is Couples ATP hydrolysis with the unwinding of duplex DNA by translocating in the 3'-5' direction.. The enzyme catalyses ATP + H2O = ADP + phosphate + H(+). Its function is as follows. The heterodimer acts as both an ATP-dependent DNA helicase and an ATP-dependent, dual-direction single-stranded exonuclease. Recognizes the chi site generating a DNA molecule suitable for the initiation of homologous recombination. The AddA nuclease domain is required for chi fragment generation; this subunit has the helicase and 3' -&gt; 5' nuclease activities. The chain is ATP-dependent helicase/nuclease subunit A from Oenococcus oeni (strain ATCC BAA-331 / PSU-1).